The primary structure comprises 162 residues: Caveolin-2 (162 aa).

The Cytoplasmic portion of the chain corresponds to 1–86 (MGLETEKADV…FEISKYVIYK (86 aa)). The residue at position 19 (tyrosine 19) is a Phosphotyrosine; by SRC. Serine 20 and serine 23 each carry phosphoserine. Tyrosine 27 bears the Phosphotyrosine; by SRC mark. Serine 36 carries the phosphoserine modification. Positions 87 to 107 (FLTLFLAIPLAFAAGILFATL) form an intramembrane region, helical. The Cytoplasmic portion of the chain corresponds to 108–162 (SCLHIWIIMPFVKTCLMVLPSVQTIWKSITDVVIAPLCTSVGRSFSSVSLQLSHD).

It belongs to the caveolin family. Monomer or homodimer. Interacts with CAV1; the interaction forms a stable heterooligomeric complex that is required for targeting to lipid rafts and for caveolae formation. Tyrosine phosphorylated forms do not form heterooligomers with the Tyr-19-phosphorylated form existing as a monomer or dimer, and the Tyr-27-form as a monomer only. Interacts (tyrosine phosphorylated form) with the SH2 domain-containing proteins, RASA1, NCK1 and SRC. Interacts (tyrosine phosphorylated form) with INSR, the interaction (Tyr-27-phosphorylated form) is increased on insulin stimulation. Interacts (Tyr-19 phosphorylated form) with MAPK1 (phosphorylated form); the interaction, promoted by insulin, leads to nuclear location and MAPK1 activation. Interacts with STAT3; the interaction is increased on insulin-induced tyrosine phosphorylation leading to STAT activation. Phosphorylated on serine and tyrosine residues. CAV1 promotes phosphorylation on Ser-23 which then targets the complex to the plasma membrane, lipid rafts and caveolae. Phosphorylation on Ser-36 appears to modulate mitosis in endothelial cells. Phosphorylation on both Tyr-19 and Tyr-27 is required for insulin-induced 'Ser-727' phosphorylation of STAT3 and its activation. Phosphorylation on Tyr-19 is required for insulin-induced phosphorylation of MAPK1 and DNA binding of STAT3. Tyrosine phosphorylation is induced by both EGF and insulin (By. similarity).

It is found in the nucleus. Its subcellular location is the cytoplasm. It localises to the golgi apparatus membrane. The protein localises to the cell membrane. The protein resides in the membrane. It is found in the caveola. In terms of biological role, may act as a scaffolding protein within caveolar membranes. Interacts directly with G-protein alpha subunits and can functionally regulate their activity. Acts as an accessory protein in conjunction with CAV1 in targeting to lipid rafts and driving caveolae formation. The Ser-36 phosphorylated form has a role in modulating mitosis in endothelial cells. Positive regulator of cellular mitogenesis of the MAPK signaling pathway. Required for the insulin-stimulated nuclear translocation and activation of MAPK1 and STAT3, and the subsequent regulation of cell cycle progression. The chain is Caveolin-2 (CAV2) from Neofelis nebulosa (Clouded leopard).